The chain runs to 103 residues: Small ribosomal subunit protein uS10 (103 aa).

This sequence belongs to the universal ribosomal protein uS10 family. Part of the 30S ribosomal subunit.

Functionally, involved in the binding of tRNA to the ribosomes. The chain is Small ribosomal subunit protein uS10 from Clostridioides difficile (strain 630) (Peptoclostridium difficile).